We begin with the raw amino-acid sequence, 381 residues long: ATP synthase subunit a (381 aa).

Residues 24 to 73 (PVAAPVEQHGQAPEAAPDAHGSPAGEPGAAVEAHAAAAEHGEAAGHEGGH) are disordered. A compositionally biased stretch (low complexity) spans 47 to 59 (AGEPGAAVEAHAA). The segment covering 60 to 73 (AAEHGEAAGHEGGH) has biased composition (basic and acidic residues). 6 helical membrane-spanning segments follow: residues 128-148 (KHVV…LGAV), 190-210 (LVTA…PFSA), 215-235 (NLSV…YAAI), 255-275 (LAPL…TKPF), 290-310 (FVIL…VAFG), and 316-336 (LSIF…FTML). Positions 351 to 360 (DHGHAEEHGH) are enriched in basic and acidic residues. The disordered stretch occupies residues 351–381 (DHGHAEEHGHAGPAAGSEHGSHVAGASPGHG).

This sequence belongs to the ATPase A chain family. In terms of assembly, F-type ATPases have 2 components, CF(1) - the catalytic core - and CF(0) - the membrane proton channel. CF(1) has five subunits: alpha(3), beta(3), gamma(1), delta(1), epsilon(1). CF(0) has three main subunits: a(1), b(2) and c(9-12). The alpha and beta chains form an alternating ring which encloses part of the gamma chain. CF(1) is attached to CF(0) by a central stalk formed by the gamma and epsilon chains, while a peripheral stalk is formed by the delta and b chains.

The protein resides in the cell inner membrane. In terms of biological role, key component of the proton channel; it plays a direct role in the translocation of protons across the membrane. This chain is ATP synthase subunit a, found in Anaeromyxobacter dehalogenans (strain 2CP-C).